The sequence spans 521 residues: Protein DETOXIFICATION 44, chloroplastic (521 aa).

Residues 1 to 31 (MAAVATSFCFSPHRSPSRFGNPNSSIRRTIV) constitute a chloroplast transit peptide. A disordered region spans residues 12–73 (PHRSPSRFGN…DHDHKPDPGI (62 aa)). Composition is skewed to polar residues over residues 18–27 (RFGNPNSSIR) and 42–61 (AVST…TSQN). 12 helical membrane-spanning segments follow: residues 80 to 100 (IMSI…TSLV), 103 to 123 (AFVG…VSVF), 167 to 187 (VSTS…ALSL), 213 to 235 (RLRA…FRGF), 242 to 262 (LYAV…LIFV), 268 to 288 (SGAA…LLWK), 314 to 334 (LLIG…SLAA), 345 to 365 (QIVL…AIAA), 385 to 405 (LFGV…VLFI), 423 to 443 (IALS…LAFV), 454 to 474 (FGFA…FMLV), and 481 to 503 (LAGI…AWRL).

The protein belongs to the multi antimicrobial extrusion (MATE) (TC 2.A.66.1) family. Expressed in shoots.

It is found in the plastid. The protein localises to the chloroplast membrane. The polypeptide is Protein DETOXIFICATION 44, chloroplastic (Arabidopsis thaliana (Mouse-ear cress)).